We begin with the raw amino-acid sequence, 291 residues long: ATP synthase gamma chain (291 aa).

The protein belongs to the ATPase gamma chain family. F-type ATPases have 2 components, CF(1) - the catalytic core - and CF(0) - the membrane proton channel. CF(1) has five subunits: alpha(3), beta(3), gamma(1), delta(1), epsilon(1). CF(0) has three main subunits: a, b and c.

It localises to the cell inner membrane. Functionally, produces ATP from ADP in the presence of a proton gradient across the membrane. The gamma chain is believed to be important in regulating ATPase activity and the flow of protons through the CF(0) complex. The protein is ATP synthase gamma chain of Cupriavidus necator (strain ATCC 17699 / DSM 428 / KCTC 22496 / NCIMB 10442 / H16 / Stanier 337) (Ralstonia eutropha).